Reading from the N-terminus, the 417-residue chain is Serine hydroxymethyltransferase (417 aa).

(6S)-5,6,7,8-tetrahydrofolate contacts are provided by residues L121 and 125-127 (GHL). K229 carries the N6-(pyridoxal phosphate)lysine modification. 354 to 356 (SPF) is a binding site for (6S)-5,6,7,8-tetrahydrofolate.

The protein belongs to the SHMT family. Homodimer. It depends on pyridoxal 5'-phosphate as a cofactor.

It is found in the cytoplasm. The catalysed reaction is (6R)-5,10-methylene-5,6,7,8-tetrahydrofolate + glycine + H2O = (6S)-5,6,7,8-tetrahydrofolate + L-serine. It participates in one-carbon metabolism; tetrahydrofolate interconversion. The protein operates within amino-acid biosynthesis; glycine biosynthesis; glycine from L-serine: step 1/1. In terms of biological role, catalyzes the reversible interconversion of serine and glycine with tetrahydrofolate (THF) serving as the one-carbon carrier. This reaction serves as the major source of one-carbon groups required for the biosynthesis of purines, thymidylate, methionine, and other important biomolecules. Also exhibits THF-independent aldolase activity toward beta-hydroxyamino acids, producing glycine and aldehydes, via a retro-aldol mechanism. The sequence is that of Serine hydroxymethyltransferase from Stutzerimonas stutzeri (strain A1501) (Pseudomonas stutzeri).